The following is a 226-amino-acid chain: UPF0111 protein AF_1799 (226 aa).

It belongs to the UPF0111 family.

The protein is UPF0111 protein AF_1799 of Archaeoglobus fulgidus (strain ATCC 49558 / DSM 4304 / JCM 9628 / NBRC 100126 / VC-16).